The chain runs to 258 residues: Trypsin eta (258 aa).

An N-terminal signal peptide occupies residues 1–22 (MNKVILRILALLFLLGIGAVSA). Residues 23 to 27 (QPDGR) constitute a propeptide, activation peptide. The 231-residue stretch at 28-258 (IVGGADTTNY…YFKDWIASRV (231 aa)) folds into the Peptidase S1 domain. The cysteines at positions 59 and 75 are disulfide-linked. Catalysis depends on charge relay system residues histidine 74 and aspartate 120. 2 disulfide bridges follow: cysteine 185–cysteine 200 and cysteine 211–cysteine 235. Serine 215 serves as the catalytic Charge relay system.

The protein belongs to the peptidase S1 family.

Its subcellular location is the secreted. It is found in the extracellular space. It catalyses the reaction Preferential cleavage: Arg-|-Xaa, Lys-|-Xaa.. The chain is Trypsin eta (etaTry) from Drosophila erecta (Fruit fly).